Consider the following 316-residue polypeptide: Arabinooligosaccharides transport system permease protein AraP (316 aa).

A run of 7 helical transmembrane segments spans residues 32–52 (VVPYVLISPFILSFIVLSFYP), 94–114 (TYMILTVVILVSIPMLFAVLL), 128–148 (ALFLPALTSVIVAGMVFRLMF), 178–198 (MFLMVVLASWRWMGINILYFL), 224–244 (FYVTLPFLKPVTIFVTTISVI), 254–274 (FVFWEAGSPGNIGLTIVGYLY), and 283–303 (MGFGAAIGVVLMLIIFVISIT). An ABC transmembrane type-1 domain is found at 89–304 (LQNTTTYMIL…LIIFVISITQ (216 aa)).

Belongs to the binding-protein-dependent transport system permease family. MalFG subfamily. In terms of assembly, the complex is composed of two ATP-binding proteins (MsmX), two transmembrane proteins (AraP and AraQ) and a solute-binding protein (AraN).

The protein resides in the cell membrane. In terms of biological role, part of the ABC transporter complex AraNPQ involved in the uptake of arabinooligosaccharides. Responsible for the translocation of the substrate across the membrane. The sequence is that of Arabinooligosaccharides transport system permease protein AraP (araP) from Halalkalibacterium halodurans (strain ATCC BAA-125 / DSM 18197 / FERM 7344 / JCM 9153 / C-125) (Bacillus halodurans).